A 155-amino-acid chain; its full sequence is 3-dehydroquinate dehydratase (155 aa).

The Proton acceptor role is filled by Y32. Positions 84, 90, and 97 each coordinate substrate. H110 acts as the Proton donor in catalysis. Substrate-binding positions include 111–112 and R121; that span reads LS.

Belongs to the type-II 3-dehydroquinase family. Homododecamer.

The catalysed reaction is 3-dehydroquinate = 3-dehydroshikimate + H2O. Its pathway is metabolic intermediate biosynthesis; chorismate biosynthesis; chorismate from D-erythrose 4-phosphate and phosphoenolpyruvate: step 3/7. Its function is as follows. Catalyzes a trans-dehydration via an enolate intermediate. In Ralstonia pickettii (strain 12J), this protein is 3-dehydroquinate dehydratase.